The primary structure comprises 91 residues: Large ribosomal subunit protein bL31B-1 (91 aa).

Belongs to the bacterial ribosomal protein bL31 family. Type B subfamily. As to quaternary structure, part of the 50S ribosomal subunit.

The polypeptide is Large ribosomal subunit protein bL31B-1 (Streptomyces avermitilis (strain ATCC 31267 / DSM 46492 / JCM 5070 / NBRC 14893 / NCIMB 12804 / NRRL 8165 / MA-4680)).